Reading from the N-terminus, the 249-residue chain is DNA polymerase sliding clamp 1 (249 aa).

This sequence belongs to the PCNA family. Homotrimer. The subunits circularize to form a toroid; DNA passes through its center. Replication factor C (RFC) is required to load the toroid on the DNA.

Its function is as follows. Sliding clamp subunit that acts as a moving platform for DNA processing. Responsible for tethering the catalytic subunit of DNA polymerase and other proteins to DNA during high-speed replication. This is DNA polymerase sliding clamp 1 from Pyrobaculum aerophilum (strain ATCC 51768 / DSM 7523 / JCM 9630 / CIP 104966 / NBRC 100827 / IM2).